The sequence spans 236 residues: Small ribosomal subunit protein uS2c (236 aa).

Belongs to the universal ribosomal protein uS2 family.

It localises to the plastid. It is found in the chloroplast. The chain is Small ribosomal subunit protein uS2c (rps2) from Carica papaya (Papaya).